A 27-amino-acid chain; its full sequence is Conotoxin Lo6/7b (27 aa).

3 disulfide bridges follow: cysteine 2–cysteine 16, cysteine 9–cysteine 19, and cysteine 15–cysteine 26. Tyrosine 27 is subject to Tyrosine amide.

Expressed by the venom duct.

The protein localises to the secreted. Its function is as follows. 1 uM of this toxin does not show any effect on voltage-gated sodium and potassium channels. Does not show antibacterial activity on both Gram-negative and Gram-positive bacteria. This is Conotoxin Lo6/7b from Conasprella longurionis (Cone snail).